A 250-amino-acid polypeptide reads, in one-letter code: Leucyl/phenylalanyl-tRNA--protein transferase (250 aa).

Residues 1–21 (MTPFRRPTVLGTSASAPFPPA) form a disordered region.

This sequence belongs to the L/F-transferase family.

It is found in the cytoplasm. The enzyme catalyses N-terminal L-lysyl-[protein] + L-leucyl-tRNA(Leu) = N-terminal L-leucyl-L-lysyl-[protein] + tRNA(Leu) + H(+). It catalyses the reaction N-terminal L-arginyl-[protein] + L-leucyl-tRNA(Leu) = N-terminal L-leucyl-L-arginyl-[protein] + tRNA(Leu) + H(+). It carries out the reaction L-phenylalanyl-tRNA(Phe) + an N-terminal L-alpha-aminoacyl-[protein] = an N-terminal L-phenylalanyl-L-alpha-aminoacyl-[protein] + tRNA(Phe). Its function is as follows. Functions in the N-end rule pathway of protein degradation where it conjugates Leu, Phe and, less efficiently, Met from aminoacyl-tRNAs to the N-termini of proteins containing an N-terminal arginine or lysine. In Xanthomonas euvesicatoria pv. vesicatoria (strain 85-10) (Xanthomonas campestris pv. vesicatoria), this protein is Leucyl/phenylalanyl-tRNA--protein transferase.